The following is a 723-amino-acid chain: MVRYMVTSALPYANGPIHAGHLAGAYLPADIFVRYLRLKGEDVVFICGTDEHGTPISFRALKEGRSPREIVDEFHEHIKITFQRAKISFDFFGRTELPIHYKLSQQFFLKAYENGHLVKKVTKQAYCEHDKMFLPDRFVIGTCPFCGAENQRGDQCEVCGRPLTPEILINPRCALCGRPISFRESAHYYIKMQDFAEKLKRWIENQPWKPNVKNMVLKWIEEGLEERAITRDLNWGIPVPLDEEDMKNKVLYVWFEAPIGYISITMEYFKRLGKPNEWKKYWLNIDSETRVIHFIGKDNIPFHAIFWPAFLMAYGKYKDEEVEAEWNLPYDIPANEYLTLEGKKFSTSRNWAIWVHEFLDVFPADYLRYYLTTIMPETRDSDFSFAEFKTRINEELVNNLGNFVHRAMTFVNRYFDGIVPERGELDELDRQALEEIEKAFEEVGELIMNYRFKDALKRVMELASFGNKYFDHKQPWKTAKEDRARTGTTVNISLQIVKALGILLEPFLPDASEKIWHLLNLDEVKKWKFKELPAGHRVRKAEILFKKVTDEQIIYFILNYMGRNNPEGAKMLLEKYYKREDVIKVAKEKFGEESKIILKRIYKDIKLEEGKEEKEMEYVKFEDFAKLDLRVGKIIEVKDHPNADKLYIVKVDLGKEVRTLVAGLKKYYKPEELLNKYVIIVANLEPKKLRGVESQGMLLAADDGENVALLMPDKEVKLGAKVR.

A 'HIGH' region motif is present at residues 11 to 21; it reads PYANGPIHAGH. Positions 143, 146, 156, and 159 each coordinate Zn(2+). The 'KMSKS' region signature appears at 344–348; sequence KFSTS. Residue threonine 347 participates in ATP binding. In terms of domain architecture, tRNA-binding spans 623–723; that stretch reads DFAKLDLRVG…KEVKLGAKVR (101 aa).

The protein belongs to the class-I aminoacyl-tRNA synthetase family. MetG type 1 subfamily. As to quaternary structure, homodimer. Zn(2+) is required as a cofactor.

Its subcellular location is the cytoplasm. It catalyses the reaction tRNA(Met) + L-methionine + ATP = L-methionyl-tRNA(Met) + AMP + diphosphate. In terms of biological role, is required not only for elongation of protein synthesis but also for the initiation of all mRNA translation through initiator tRNA(fMet) aminoacylation. This is Methionine--tRNA ligase from Pyrococcus horikoshii (strain ATCC 700860 / DSM 12428 / JCM 9974 / NBRC 100139 / OT-3).